The chain runs to 178 residues: MTKKEQALIEQYAKSLVQVCQERDTLEALQADVLAILEVFKATNLAKTLSSLAVPRAKKLELVRQLQGDNIIYLNNFLEVMLQNEREAYLYQVLLRVLSELASVSNQYDVTVTSAVPLSEEQKQRVRTVVSKRLAVKTGRLIEKVDPSLIGGFMISVNNKVIDTSIRRQLQAFKMNLK.

It belongs to the ATPase delta chain family. F-type ATPases have 2 components, F(1) - the catalytic core - and F(0) - the membrane proton channel. F(1) has five subunits: alpha(3), beta(3), gamma(1), delta(1), epsilon(1). F(0) has three main subunits: a(1), b(2) and c(10-14). The alpha and beta chains form an alternating ring which encloses part of the gamma chain. F(1) is attached to F(0) by a central stalk formed by the gamma and epsilon chains, while a peripheral stalk is formed by the delta and b chains.

It is found in the cell membrane. F(1)F(0) ATP synthase produces ATP from ADP in the presence of a proton or sodium gradient. F-type ATPases consist of two structural domains, F(1) containing the extramembraneous catalytic core and F(0) containing the membrane proton channel, linked together by a central stalk and a peripheral stalk. During catalysis, ATP synthesis in the catalytic domain of F(1) is coupled via a rotary mechanism of the central stalk subunits to proton translocation. In terms of biological role, this protein is part of the stalk that links CF(0) to CF(1). It either transmits conformational changes from CF(0) to CF(1) or is implicated in proton conduction. This chain is ATP synthase subunit delta, found in Streptococcus equi subsp. zooepidemicus (strain MGCS10565).